Consider the following 306-residue polypeptide: MAAALVSVPRIKLGSQGLEVSAQGLGCMGMSAFYGPPKPESEMIKLIHHAVDAGVTFLDTSDVYGPHTNEVLLGKALQGGVREKVELATKFGVSFADGKREIHGDPAYVRTACEGSFKRLGVDCIDLYYQHRIDKRVPIEVTIGELKKLVEEGKIKYIGLSEASASTIRRAHAVHPITAVQLEWSLWSRDAEEDIIPTCRELGIGIVAYSPLGRGFFSSGAKLVDSLSEQDFRKHMPRFQPENLDKNAQIFERVRRDGSTERMHAITARVGLGSPPRKRRLPHTWHNKNRQLQPERGGTVCEAYTG.

Residue Y64 is the Proton donor of the active site. H131 provides a ligand contact to substrate. 210-220 is a binding site for NADP(+); sequence SPLGRGFFSSG. The disordered stretch occupies residues 272 to 306; that stretch reads LGSPPRKRRLPHTWHNKNRQLQPERGGTVCEAYTG. The span at 276 to 289 shows a compositional bias: basic residues; the sequence is PRKRRLPHTWHNKN.

It belongs to the aldo/keto reductase family. Aldo/keto reductase 2 subfamily. In terms of tissue distribution, leaves and roots.

This chain is IN2-2 protein (IN2-2), found in Zea mays (Maize).